A 240-amino-acid chain; its full sequence is LexA repressor (240 aa).

Residues 26–46 (FDEMKEALDLASKSGIHRLIT) constitute a DNA-binding region (H-T-H motif). Active-site for autocatalytic cleavage activity residues include S161 and K199.

This sequence belongs to the peptidase S24 family. In terms of assembly, homodimer.

It carries out the reaction Hydrolysis of Ala-|-Gly bond in repressor LexA.. Represses a number of genes involved in the response to DNA damage (SOS response), including recA and lexA. In the presence of single-stranded DNA, RecA interacts with LexA causing an autocatalytic cleavage which disrupts the DNA-binding part of LexA, leading to derepression of the SOS regulon and eventually DNA repair. In Brucella melitensis biotype 1 (strain ATCC 23456 / CCUG 17765 / NCTC 10094 / 16M), this protein is LexA repressor.